The following is a 483-amino-acid chain: PAT complex subunit CCDC47 (483 aa).

Positions 1 to 20 (MKAFYAFCVVLLVFGSVSEA) are cleaved as a signal peptide. Topologically, residues 21–135 (KFDDFEDEED…PAHLQNSWES (115 aa)) are cytoplasmic. Residues 46 to 119 (MEDSVTESPQ…DTSSNKNKDP (74 aa)) are disordered. Over residues 60–104 (TEDDEDEATVELEGQDESQEGDFEDADTQEGDTESEPYDDEEFEG) the composition is skewed to acidic residues. A compositionally biased stretch (basic and acidic residues) spans 105 to 118 (YEDKPDTSSNKNKD). Residues 136–156 (YYLEILMVTGLLAYIMNYIIG) traverse the membrane as a helical segment. The Lumenal portion of the chain corresponds to 157-483 (KNKNSRLAQA…KMKQIKVKAM (327 aa)). N-linked (GlcNAc...) asparagine glycosylation occurs at Asn178. Residues 424–483 (QRQEAAQSRREEKKRAEKERIMNEEDPEKQRRLEEAALRREQKKLEKKQMKMKQIKVKAM) form a disordered region. Over residues 430–472 (QSRREEKKRAEKERIMNEEDPEKQRRLEEAALRREQKKLEKKQ) the composition is skewed to basic and acidic residues. The stretch at 450–483 (PEKQRRLEEAALRREQKKLEKKQMKMKQIKVKAM) forms a coiled coil. Positions 473 to 483 (MKMKQIKVKAM) are enriched in basic residues.

Belongs to the CCDC47 family. In terms of assembly, component of the PAT complex, composed of WDR83OS/Asterix and CCDC47. The PAT complex is part of the multi-pass translocon (MPT) complex, composed of three subcomplexes, the GEL complex (composed of RAB5IF/OPTI and TMCO1), the BOS complex (composed of NCLN/Nicalin, NOMO1 and TMEM147) and the PAT complex (composed of WDR83OS/Asterix and CCDC47). The MPT complex associates with the SEC61 complex. Interacts with VCP, HSPA5, DERL1, DERL2 and SELENOS. In the embryo, expressed in the endodermal layer of the yolk sac and in the small intestine.

The protein resides in the endoplasmic reticulum membrane. The protein localises to the rough endoplasmic reticulum membrane. Its function is as follows. Component of the multi-pass translocon (MPT) complex that mediates insertion of multi-pass membrane proteins into the lipid bilayer of membranes. The MPT complex takes over after the SEC61 complex: following membrane insertion of the first few transmembrane segments of proteins by the SEC61 complex, the MPT complex occludes the lateral gate of the SEC61 complex to promote insertion of subsequent transmembrane regions. Within the MPT complex, the PAT subcomplex sequesters any highly polar regions in the transmembrane domains away from the non-polar membrane environment until they can be buried in the interior of the fully assembled protein. Within the PAT subcomplex, CCDC47 occludes the lateral gate of the SEC61 complex. Involved in the regulation of calcium ion homeostasis in the ER. Required for proper protein degradation via the ERAD (ER-associated degradation) pathway. Has an essential role in the maintenance of ER organization during embryogenesis. The polypeptide is PAT complex subunit CCDC47 (Mus musculus (Mouse)).